The chain runs to 138 residues: MAQMTVQIVTPDGLVYDHHAAFVSVKTIDGELGILPRHINTIAVLEVDQVKVRRVDDDKHIDWVAVNGGIIEIADNVITIVADSAERERDIDISRAERAKLRAEQEIEEAHDKHLIDQERRAKIALQRAINRINVGSK.

This sequence belongs to the ATPase epsilon chain family. In terms of assembly, F-type ATPases have 2 components, CF(1) - the catalytic core - and CF(0) - the membrane proton channel. CF(1) has five subunits: alpha(3), beta(3), gamma(1), delta(1), epsilon(1). CF(0) has three main subunits: a, b and c.

The protein localises to the cell membrane. Produces ATP from ADP in the presence of a proton gradient across the membrane. This is ATP synthase epsilon chain from Streptococcus gordonii (strain Challis / ATCC 35105 / BCRC 15272 / CH1 / DL1 / V288).